A 420-amino-acid chain; its full sequence is Glucose-1-phosphate adenylyltransferase (420 aa).

Residues Tyr97, Gly162, 177–178, and Ser188 contribute to the alpha-D-glucose 1-phosphate site; that span reads EK.

Belongs to the bacterial/plant glucose-1-phosphate adenylyltransferase family. In terms of assembly, homotetramer.

The enzyme catalyses alpha-D-glucose 1-phosphate + ATP + H(+) = ADP-alpha-D-glucose + diphosphate. The protein operates within glycan biosynthesis; glycogen biosynthesis. Functionally, involved in the biosynthesis of ADP-glucose, a building block required for the elongation reactions to produce glycogen. Catalyzes the reaction between ATP and alpha-D-glucose 1-phosphate (G1P) to produce pyrophosphate and ADP-Glc. The polypeptide is Glucose-1-phosphate adenylyltransferase (Pseudothermotoga lettingae (strain ATCC BAA-301 / DSM 14385 / NBRC 107922 / TMO) (Thermotoga lettingae)).